A 551-amino-acid chain; its full sequence is RanBD1 domain-containing protein C584.03c (551 aa).

In terms of domain architecture, RanBD1 spans 1–309; the sequence is MDELLNVASH…LLLKYADDET (309 aa). Residue serine 441 is modified to Phosphoserine. The segment at 522-551 is disordered; the sequence is SVIPHSEPESSSKVINCQAKLNVEKEKKNP.

The protein resides in the nucleus. The chain is RanBD1 domain-containing protein C584.03c from Schizosaccharomyces pombe (strain 972 / ATCC 24843) (Fission yeast).